The chain runs to 209 residues: Uracil phosphoribosyltransferase (209 aa).

Residues Arg79, Arg104, and 131 to 139 (DPMLATGGS) each bind 5-phospho-alpha-D-ribose 1-diphosphate. Uracil contacts are provided by residues Ile194 and 199–201 (GDA). A 5-phospho-alpha-D-ribose 1-diphosphate-binding site is contributed by Asp200.

Belongs to the UPRTase family. Homodimer. Requires Mg(2+) as cofactor.

The enzyme catalyses UMP + diphosphate = 5-phospho-alpha-D-ribose 1-diphosphate + uracil. It participates in pyrimidine metabolism; UMP biosynthesis via salvage pathway; UMP from uracil: step 1/1. Allosterically activated by GTP. Catalyzes the conversion of uracil and 5-phospho-alpha-D-ribose 1-diphosphate (PRPP) to UMP and diphosphate. This Bacillus caldolyticus protein is Uracil phosphoribosyltransferase.